A 1499-amino-acid chain; its full sequence is Ubiquitinating/deubiquitinating enzyme SdeA (1499 aa).

The segment at M1–K193 is deubiquitinase. Residues H64 and D80 each act as for deubiquitinase activity in the active site. Residue C118 is the Nucleophile; for deubiquitinase activity of the active site. The tract at residues P760 to T1000 is mono-ADP-ribosyltransferase. Residue R766–E772 coordinates NAD(+). E860 bears the 5-glutamyl glutamate mark. Residue E862 participates in NAD(+) binding. A coiled-coil region spans residues K1059–L1181.

It belongs to the SidE family. As to quaternary structure, interacts with IcmS. In terms of processing, is able to ubiquitinate itself, but this modification is not required to ubiquitinate Rab33b. Post-translationally, glutamylated at Glu-860 by SidJ; glutamylation inhibits SdeA activity to catalyze the production of ADP-ribosylated ubiquitin.

It localises to the secreted. The protein resides in the host cell. The catalysed reaction is L-arginyl-[protein] + NAD(+) = N(omega)-(ADP-D-ribosyl)-L-arginyl-[protein] + nicotinamide + H(+). With respect to regulation, ubiquitination catalyzed by SdeA is insensitive to the cysteine alkylation agent maleimide, suggesting that a cysteine conjugation of ubiquitin does not form during the reaction. Secreted effector that interferes with the host cell ubiquitin pathway and is required for intracellular bacterial replication. Catalyzes the ubiquitination of several mammalian Rab proteins (Rab33b, Rab1, Rab6a and Rab30) during L.pneumophila infection, without engaging the standard cellular enzyme cascade (E1 and E2). Transfers an ADP-ribose moiety from NAD to the 'Arg-42' residue of ubiquitin in a reaction that releases nicotinamide. The modified ubiquitin is subsequently transferred to serine residues of the substrate protein via a phosphoribose linker that results in the release of AMP. Cannot ubiquitinate the endosomal Rab5 or the cytoskeletal small GTPase Rac1. Also acts as a deubiquitinase (DUB), catalyzing the cleavage of three of the most abundant polyubiquitin chains ('Lys-11', 'Lys-48' and 'Lys-63') with a distinct preference for 'Lys-63' linkages; is thus able to efficiently remove 'Lys-63'-linked polyubiquitin chains from the phagosomal surface. Is also able to remove NEDD8 from neddylated proteins, but is unable to recognize SUMO. The DUB activity of SdeA is important for regulating the dynamics of ubiquitin association with the bacterial phagosome, but is dispensable for its role in intracellular bacterial replication. This Legionella pneumophila subsp. pneumophila (strain Philadelphia 1 / ATCC 33152 / DSM 7513) protein is Ubiquitinating/deubiquitinating enzyme SdeA.